A 165-amino-acid chain; its full sequence is ATFRVLAKVLAELGKVSRKIAVGVDNESGGSWTALNAYFRSGTTDVILPDLVPNQKALLYRGGKDTGPVATGVVGVLAYAMSDGNTLAILFSVPYDYNLYSNWWNVKVYSGKRRADQGMSEDLSYGNPYGGDNGWHARKLAYGLKERGFMKSSAQSILEIHATKA.

The interval 1–17 is N-terminal region; the sequence is ATFRVLAKVLAELGKVS. Phosphocholine-binding residues include S41, V74, S92, P94, and Y125. The interval 92–107 is trp-rich region, which is important for the binding to lipid membrane; the sequence is SVPYDYNLYSNWWNVK.

The protein belongs to the actinoporin family. Sea anemone subfamily. In terms of assembly, octamer or nonamer in membranes. Monomer in the soluble state.

It is found in the secreted. The protein localises to the nematocyst. It localises to the target cell membrane. Its function is as follows. Pore-forming protein that forms cations-selective hydrophilic pores of around 1 nm and causes cardiac stimulation and cytolysis. Pore formation is a multi-step process that involves specific recognition of membrane sphingomyelin (but neither cholesterol nor phosphatidylcholine) using aromatic rich region and adjacent phosphocholine (POC) binding site, firm binding to the membrane (mainly driven by hydrophobic interactions) accompanied by the transfer of the N-terminal region to the lipid-water interface and finally pore formation after oligomerization of monomers. Cytolytic effects include red blood cells hemolysis, platelet aggregation and lysis, cytotoxic and cytostatic effects on fibroblasts. Lethality in mammals has been ascribed to severe vasospasm of coronary vessels, cardiac arrhythmia, and inotropic effects. This chain is DELTA-actitoxin-Oor1a, found in Oulactis orientalis (Japan anemone).